Consider the following 195-residue polypeptide: Phosphoribosylglycinamide formyltransferase (195 aa).

G12–N14 is a binding site for N(1)-(5-phospho-beta-D-ribosyl)glycinamide. (6R)-10-formyltetrahydrofolate-binding positions include K65, M90–I93, and N107. Catalysis depends on H109, which acts as the Proton donor.

It belongs to the GART family.

The enzyme catalyses N(1)-(5-phospho-beta-D-ribosyl)glycinamide + (6R)-10-formyltetrahydrofolate = N(2)-formyl-N(1)-(5-phospho-beta-D-ribosyl)glycinamide + (6S)-5,6,7,8-tetrahydrofolate + H(+). It functions in the pathway purine metabolism; IMP biosynthesis via de novo pathway; N(2)-formyl-N(1)-(5-phospho-D-ribosyl)glycinamide from N(1)-(5-phospho-D-ribosyl)glycinamide (10-formyl THF route): step 1/1. Its function is as follows. Catalyzes the transfer of a formyl group from 10-formyltetrahydrofolate to 5-phospho-ribosyl-glycinamide (GAR), producing 5-phospho-ribosyl-N-formylglycinamide (FGAR) and tetrahydrofolate. The sequence is that of Phosphoribosylglycinamide formyltransferase from Bacillus subtilis (strain 168).